The primary structure comprises 563 residues: Grainyhead-like protein 1 homolog (563 aa).

The Grh/CP2 DB domain occupies 194-428; it reads NNLGFQYVLE…ELDKPAALFI (235 aa). Interaction with DNA stretches follow at residues 326-335 and 372-375; these read TDFSTQKGVK and RKLR. The disordered stretch occupies residues 377–405; the sequence is EDKRAQKRKVQEYTAGALPGGRKKSDGEY.

The protein belongs to the grh/CP2 family. Grainyhead subfamily.

The protein resides in the nucleus. Its function is as follows. Probable transcription factor. Binds a motif with the core sequence 5'-C[ACT][TG]G-3' in regulatory elements of target genes. Many putative target genes show oscillating expression levels, perhaps as a result of rhythmic variation in accumulation of grh-1. Plays a role in proper cuticle formation and/or barrier function and is required repetitively during development, for successful completion of each molt. Involved in modulating lifespan. Plays a role in defense response to bacteria. May act upstream of the p38 MAP kinase / pmk-1 pathway. May act downstream of the insulin/IGF-1 receptor signaling (IIS) pathway. The chain is Grainyhead-like protein 1 homolog from Caenorhabditis elegans.